The sequence spans 192 residues: Leucine-rich repeat-containing protein 51 (192 aa).

LRR repeat units follow at residues 49 to 71 (SLTQ…NQVA), 80 to 101 (NLAW…LTTF), and 103 to 124 (NLSV…NKLA). The 39-residue stretch at 137–175 (NPMEEEKGYRQYVLCTLSRITTFDFSGVTKADRTTAEVW) folds into the LRRCT domain.

It is found in the cytoplasm. In Homo sapiens (Human), this protein is Leucine-rich repeat-containing protein 51.